A 380-amino-acid polypeptide reads, in one-letter code: MAPNLRKSHPLLKMINNSLIDLPTPSNISAWWNFGSLLGICLMTQILTGLLLAMHYTADTTLAFSSVAHTCRNVQYGWLIRNLHANGASFFFICIYLHIGRGFYYGSYLYKETWNTGIILLLTLMATAFVGYVLPWGQMSFWGATVITNLFSAIPYIGQTLVEWAWGGFSVDNPTLTRFFALHFLLPFAIAGLTLIHLTFLHESGSNNPLGIVSNCDKIPFHPYFTLKDILGFTLMVLPLTSLALFSPNLLGDPENFTPANPLVTPPHIKPEWYFLFAYAILRSIPNKLGGVLALAASVLVLFLSPFLHKAKQRTMTFRPLSQLLFWILVTNLFILTWVGSQPVEHPFIIIGQLASITYFTILLILFPIIGTLENKMLNF.

The next 4 helical transmembrane spans lie at 34–54 (FGSL…LLAM), 78–99 (WLIR…YLHI), 114–134 (WNTG…GYVL), and 179–199 (FFAL…IHLT). Heme b contacts are provided by histidine 84 and histidine 98. The heme b site is built by histidine 183 and histidine 197. Residue histidine 202 participates in a ubiquinone binding. 4 helical membrane-spanning segments follow: residues 227–247 (LKDI…ALFS), 289–309 (LGGV…PFLH), 321–341 (LSQL…WVGS), and 348–368 (FIII…ILFP).

The protein belongs to the cytochrome b family. In terms of assembly, the cytochrome bc1 complex contains 11 subunits: 3 respiratory subunits (MT-CYB, CYC1 and UQCRFS1), 2 core proteins (UQCRC1 and UQCRC2) and 6 low-molecular weight proteins (UQCRH/QCR6, UQCRB/QCR7, UQCRQ/QCR8, UQCR10/QCR9, UQCR11/QCR10 and a cleavage product of UQCRFS1). This cytochrome bc1 complex then forms a dimer. Heme b serves as cofactor.

It localises to the mitochondrion inner membrane. Component of the ubiquinol-cytochrome c reductase complex (complex III or cytochrome b-c1 complex) that is part of the mitochondrial respiratory chain. The b-c1 complex mediates electron transfer from ubiquinol to cytochrome c. Contributes to the generation of a proton gradient across the mitochondrial membrane that is then used for ATP synthesis. In Macronectes halli (Hall's giant petrel), this protein is Cytochrome b (MT-CYB).